A 352-amino-acid chain; its full sequence is Holliday junction branch migration complex subunit RuvB (352 aa).

The large ATPase domain (RuvB-L) stretch occupies residues Ala4 to Tyr185. Residues Ile24, Arg25, Gly66, Lys69, Thr70, Thr71, Glu132–Phe134, Arg175, Tyr185, and Arg222 contribute to the ATP site. A Mg(2+)-binding site is contributed by Thr70. Residues Ser186–Asp256 form a small ATPAse domain (RuvB-S) region. A head domain (RuvB-H) region spans residues Glu259–Asp352. Residues Arg295, Arg314, and Arg319 each contribute to the DNA site.

Belongs to the RuvB family. Homohexamer. Forms an RuvA(8)-RuvB(12)-Holliday junction (HJ) complex. HJ DNA is sandwiched between 2 RuvA tetramers; dsDNA enters through RuvA and exits via RuvB. An RuvB hexamer assembles on each DNA strand where it exits the tetramer. Each RuvB hexamer is contacted by two RuvA subunits (via domain III) on 2 adjacent RuvB subunits; this complex drives branch migration. In the full resolvosome a probable DNA-RuvA(4)-RuvB(12)-RuvC(2) complex forms which resolves the HJ.

The protein localises to the cytoplasm. The catalysed reaction is ATP + H2O = ADP + phosphate + H(+). The RuvA-RuvB-RuvC complex processes Holliday junction (HJ) DNA during genetic recombination and DNA repair, while the RuvA-RuvB complex plays an important role in the rescue of blocked DNA replication forks via replication fork reversal (RFR). RuvA specifically binds to HJ cruciform DNA, conferring on it an open structure. The RuvB hexamer acts as an ATP-dependent pump, pulling dsDNA into and through the RuvAB complex. RuvB forms 2 homohexamers on either side of HJ DNA bound by 1 or 2 RuvA tetramers; 4 subunits per hexamer contact DNA at a time. Coordinated motions by a converter formed by DNA-disengaged RuvB subunits stimulates ATP hydrolysis and nucleotide exchange. Immobilization of the converter enables RuvB to convert the ATP-contained energy into a lever motion, pulling 2 nucleotides of DNA out of the RuvA tetramer per ATP hydrolyzed, thus driving DNA branch migration. The RuvB motors rotate together with the DNA substrate, which together with the progressing nucleotide cycle form the mechanistic basis for DNA recombination by continuous HJ branch migration. Branch migration allows RuvC to scan DNA until it finds its consensus sequence, where it cleaves and resolves cruciform DNA. In Pseudomonas fluorescens (strain SBW25), this protein is Holliday junction branch migration complex subunit RuvB.